A 175-amino-acid polypeptide reads, in one-letter code: Chromobox protein homolog hpl-2 (175 aa).

Residues 19-78 (FMVEKVLDKRTGKAGRDEFLIQWQGFPESDSSWEPRENLQCVEMLDEFEREFSKREKPIR) form the Chromo domain. Residues 71 to 109 (SKREKPIRKRHSQKPEPSEDQADPEEDKDEKKETNQNDK) form a disordered region. Residues 88–98 (SEDQADPEEDK) are compositionally biased toward acidic residues. Positions 99–109 (DEKKETNQNDK) are enriched in basic and acidic residues. The region spanning 115 to 172 (KQLKCIVGLTKGPGELHFLCKFSDDTARLLPAKEVNSRYPSQVIRYYESKLTIQDPKA) is the Chromo 2; shadow subtype domain.

In terms of assembly, interacts with histone H3 when di-, or tri-methylated at 'Lys-27' (H3K27me2/me3), or tri-methylated at 'Lys-9' (H3K9me3). Interacts with Tar DNA-binding protein homolog tdp-1; interaction may maintain localization of hpl-2 to gene bodies. Interacts with histone H1 his-24, probably via interaction with hpl-1. Interacts with chromobox protein homolog hpl-1. May form homodimers. Interacts (via chromo (shadow subtype) domain) with zinc finger protein lin-13 (via PLVPV motif); the interaction is direct and influences localization of hpl-2 to nuclear foci.

The protein resides in the nucleus. It localises to the chromosome. Its function is as follows. Seems to be involved in transcriptional silencing in heterochromatin-like complexes. Probably does not act as global transcriptional repressor, instead targeting a subset of genes. Involved in RNA processing mediated by Tar DNA-binding protein homolog tdp-1. Plays a role in linking epigenetic regulation with the innate immune response. Involved in the endoplasmic reticulum (ER) stress response via modulation of the unfolded protein response (UPR), acting mainly through the IRE1-XBP1 pathway and perhaps, to a lesser extent, through the autophagy pathway. May act in a common pathway with retinoblastoma-like protein homolog lin-35 and zinc finger protein lin-13 to influence the ER stress response in the intestine. Plays a role in the formation of the vulva and in fertility, acting together with a CoREST-like complex, and chromobox protein homolog hpl-1. Acting in concert with hpl-1 and histone H1 protein his-24, involved in reproduction, somatic gonad development, male tail development and vulval cell fate specification; perhaps as a result of modulating expression of Hox genes mab-5 and egl-5. In vulval cell fate specification may act by repressing transcription, of EGF family gene lin-3 in hypodermal hyp7, and of homeobox lin-39 in vulval precursor cells (VPC). Role in growth and somatic gonad development is antagonized by histone-lysine N-methyltransferase set-2/SET1. Required for larval development, acting redundantly with hpl-1. Plays a role in regulation of the developmentally arrested larval state known as dauer, longevity, and lipid metabolism. This chain is Chromobox protein homolog hpl-2, found in Caenorhabditis elegans.